The chain runs to 513 residues: ATP synthase subunit alpha (513 aa).

G169–T176 lines the ATP pocket.

This sequence belongs to the ATPase alpha/beta chains family. In terms of assembly, F-type ATPases have 2 components, CF(1) - the catalytic core - and CF(0) - the membrane proton channel. CF(1) has five subunits: alpha(3), beta(3), gamma(1), delta(1), epsilon(1). CF(0) has three main subunits: a(1), b(2) and c(9-12). The alpha and beta chains form an alternating ring which encloses part of the gamma chain. CF(1) is attached to CF(0) by a central stalk formed by the gamma and epsilon chains, while a peripheral stalk is formed by the delta and b chains.

It localises to the cell inner membrane. It catalyses the reaction ATP + H2O + 4 H(+)(in) = ADP + phosphate + 5 H(+)(out). Produces ATP from ADP in the presence of a proton gradient across the membrane. The alpha chain is a regulatory subunit. The chain is ATP synthase subunit alpha from Halorhodospira halophila (strain DSM 244 / SL1) (Ectothiorhodospira halophila (strain DSM 244 / SL1)).